Here is a 339-residue protein sequence, read N- to C-terminus: Probable N5-carboxyaminoimidazole ribonucleotide mutase (339 aa).

3 residues coordinate substrate: Ser-11, Asp-14, and Arg-41.

This sequence belongs to the AIR carboxylase family. Class I subfamily.

The catalysed reaction is 5-carboxyamino-1-(5-phospho-D-ribosyl)imidazole + H(+) = 5-amino-1-(5-phospho-D-ribosyl)imidazole-4-carboxylate. Its pathway is purine metabolism; IMP biosynthesis via de novo pathway; 5-amino-1-(5-phospho-D-ribosyl)imidazole-4-carboxylate from 5-amino-1-(5-phospho-D-ribosyl)imidazole (N5-CAIR route): step 2/2. Its function is as follows. Catalyzes the conversion of N5-carboxyaminoimidazole ribonucleotide (N5-CAIR) to 4-carboxy-5-aminoimidazole ribonucleotide (CAIR). The chain is Probable N5-carboxyaminoimidazole ribonucleotide mutase from Methanobrevibacter smithii.